A 1564-amino-acid polypeptide reads, in one-letter code: ATP-dependent permease PDR10 (1564 aa).

A compositionally biased stretch (polar residues) spans 1 to 16 (MLQAPSSSNSGLNQGN). The segment at 1 to 37 (MLQAPSSSNSGLNQGNAAPDGPPNETQPYEGLDAAAQ) is disordered. Residues 1–587 (MLQAPSSSNS…AAIFFAILFN (587 aa)) lie on the Cytoplasmic side of the membrane. The region spanning 174–430 (ISRRLFHRTH…FQRMGYVCPE (257 aa)) is the ABC transporter 1 domain. The next 5 membrane-spanning stretches (helical) occupy residues 588 to 608 (AFSS…TEKH), 624 to 644 (TFSD…PYYF), 674 to 694 (RCIG…SVLL), 699 to 719 (MYTG…WISY), and 732 to 752 (INEF…GPNY). Residue N754 is glycosylated (N-linked (GlcNAc...) asparagine). Residues 839-849 (KGIVSEKKKKN) show a composition bias toward basic residues. The tract at residues 839-872 (KGIVSEKKKKNQPTLSTSDAEKDVEMNNNSSATD) is disordered. Residues 841 to 861 (IVSEKKKKNQPTLSTSDAEKD) traverse the membrane as a helical segment. The Cytoplasmic portion of the chain corresponds to 862–1304 (VEMNNNSSAT…IFMFTVVFNP (443 aa)). An ABC transporter 2 domain is found at 923 to 1166 (FHWKNLCYDI…MINYFEAHGA (244 aa)). 959–966 (GASGAGKT) contributes to the ATP binding site. 6 consecutive transmembrane segments (helical) span residues 1305–1325 (ILQQ…ARER), 1340–1360 (ILVE…VYYY), 1390–1410 (VYIS…ENAA), 1426–1446 (VLAT…VSPL), 1459–1479 (ANAS…PSGM), and 1491–1511 (STGT…FCQF). Topologically, residues 1512–1564 (SSTNDYLATVSSSYSRRWMNYGIFSAYIVFDYCAAIFLYWLVRVPKKSKKLKK) are cytoplasmic.

This sequence belongs to the ABC transporter superfamily. ABCG family. PDR (TC 3.A.1.205) subfamily.

The protein localises to the membrane. The polypeptide is ATP-dependent permease PDR10 (PDR10) (Saccharomyces cerevisiae (strain ATCC 204508 / S288c) (Baker's yeast)).